We begin with the raw amino-acid sequence, 534 residues long: Signal recognition particle subunit SRP54 (534 aa).

The tract at residues 1–296 (MVLQDLGRRI…EPKAFIQKLL (296 aa)) is G-domain. GTP is bound by residues 109–116 (GLQGAGKT), 191–195 (DTSGR), and 249–252 (TKTD). An M-domain region spans residues 297 to 534 (GMGDMAGLVE…GGGGGRGRGR (238 aa)).

The protein belongs to the GTP-binding SRP family. SRP54 subfamily. Fungal signal recognition particle consists of a 7S RNA molecule (scR1) and at least six protein subunits: srp72, srp68, srpA/srp54, sec65, srp21 and srp14.

The protein localises to the cytoplasm. The protein resides in the endoplasmic reticulum. The catalysed reaction is GTP + H2O = GDP + phosphate + H(+). Functionally, signal-recognition-particle (SRP) assembly has a crucial role in targeting secretory proteins to the rough endoplasmic reticulum (ER) membrane. SRP is required for the cotranslational protein translocation for ER import and preferentially recognizes strongly hydrophobic signal sequences. It is involved in targeting the nascent chain-ribosome (RNC) complex to the ER and is proposed to participate in the arrest of nascent chain elongation during membrane targeting. srpA/srp54 binds to the signal sequence of presecretory protein when they emerge from the ribosomes. srpA/srp54 interacts with the scR1 RNA and mediates the association of the resulting SRP-RNC complex with the signal recognition particle receptor (SR) via its alpha subunit srp101. Both, srpA/srp54 and srp101, are locked in their GTP bound forms in the SRP-RNC-SR complex, which dissociates upon transferring the signal sequence to the protein-conducting channel (translocon). After signal sequence transfer, srpA/srp54 and srp101 act as reciprocal GTPase-activating proteins (GAPs), thereby resolving their association. The sequence is that of Signal recognition particle subunit SRP54 (srpA) from Aspergillus niger.